Here is a 102-residue protein sequence, read N- to C-terminus: Large ribosomal subunit protein bL21 (102 aa).

It belongs to the bacterial ribosomal protein bL21 family. As to quaternary structure, part of the 50S ribosomal subunit. Contacts protein L20.

Functionally, this protein binds to 23S rRNA in the presence of protein L20. The protein is Large ribosomal subunit protein bL21 of Bifidobacterium longum subsp. infantis (strain ATCC 15697 / DSM 20088 / JCM 1222 / NCTC 11817 / S12).